A 353-amino-acid polypeptide reads, in one-letter code: UPF0283 membrane protein YcjF (353 aa).

The next 3 helical transmembrane spans lie at 70–90 (MVMG…VQWT), 100–120 (VALG…GSVV), and 213–233 (ESTL…FIAW).

This sequence belongs to the UPF0283 family.

The protein localises to the cell inner membrane. In Escherichia coli O45:K1 (strain S88 / ExPEC), this protein is UPF0283 membrane protein YcjF.